Reading from the N-terminus, the 84-residue chain is Cell division topological specificity factor (84 aa).

The protein belongs to the MinE family.

Functionally, prevents the cell division inhibition by proteins MinC and MinD at internal division sites while permitting inhibition at polar sites. This ensures cell division at the proper site by restricting the formation of a division septum at the midpoint of the long axis of the cell. This Burkholderia multivorans (strain ATCC 17616 / 249) protein is Cell division topological specificity factor.